The chain runs to 203 residues: Cryptic neisserial protein 1 (203 aa).

A signal peptide spans 1-18 (MRRAILLILTLTVGTSLA).

Belongs to the Cnp family.

It is found in the periplasm. It localises to the cytoplasm. This Neisseria gonorrhoeae (strain ATCC 700825 / FA 1090) protein is Cryptic neisserial protein 1.